Here is a 299-residue protein sequence, read N- to C-terminus: MLYQQIAKNKRRTILVMAGFVFLVALIGAAVGYLFAGTATGGVIIALVIAVIYVSIMVGQSTDVVMSMNNAREIHSADEAPELWHIVEDMALVARVPMPRVFIIDDPSPNAFATGNNPQHAAVAATTGLLAIMNREELESVMAHEMTHVRNYDIRLQTIALALTAAISLLVNFAGNFMWFGASSRRDDREEGAGGVFAIIGSILLIILAPLAATMVQMALSRQREYQADAGAVELTRNPQGMISALRQLQHAEPMQNVDPASAALYISDPQENARHKSLSGLFDTHPPLEARIERLEKM.

The next 2 membrane-spanning stretches (helical) occupy residues 14–34 (ILVMAGFVFLVALIGAAVGYL) and 39–59 (ATGGVIIALVIAVIYVSIMVG). His144 contacts Zn(2+). Glu145 is an active-site residue. His148 is a Zn(2+) binding site. 2 consecutive transmembrane segments (helical) span residues 159–179 (IALALTAAISLLVNFAGNFMW) and 196–216 (VFAIIGSILLIILAPLAATMV). Zn(2+) is bound at residue Glu225.

Belongs to the peptidase M48B family. Zn(2+) serves as cofactor.

The protein resides in the cell membrane. The sequence is that of Protease HtpX homolog from Limosilactobacillus fermentum (strain NBRC 3956 / LMG 18251) (Lactobacillus fermentum).